Consider the following 395-residue polypeptide: ATP-dependent RNA helicase eIF4A (395 aa).

A Q motif motif is present at residues 22–50 (TSFDDLGLKDELLRGIYGYGFENPSSIQQ). One can recognise a Helicase ATP-binding domain in the interval 53-223 (ILPVIKGNDV…GKFMRDPVRI (171 aa)). 66-73 (AQSGTGKT) contacts ATP. Positions 171-174 (DEAD) match the DEAD box motif. The 162-residue stretch at 234–395 (GIKQFYIDVE…EMPTNIADLI (162 aa)) folds into the Helicase C-terminal domain.

The protein belongs to the DEAD box helicase family. eIF4A subfamily. In terms of assembly, component of the eIF4F complex, which composition varies with external and internal environmental conditions. It is composed of at least eIF4A, eIF4E and eIF4G.

The protein localises to the cytoplasm. It carries out the reaction ATP + H2O = ADP + phosphate + H(+). ATP-dependent RNA helicase which is a subunit of the eIF4F complex involved in cap recognition and is required for mRNA binding to ribosome. In the current model of translation initiation, eIF4A unwinds RNA secondary structures in the 5'-UTR of mRNAs which is necessary to allow efficient binding of the small ribosomal subunit, and subsequent scanning for the initiator codon. The protein is ATP-dependent RNA helicase eIF4A (TIF1) of Yarrowia lipolytica (strain CLIB 122 / E 150) (Yeast).